Consider the following 276-residue polypeptide: Large ribosomal subunit protein uL2c (276 aa).

Disordered regions lie at residues 1–51 (MAIR…GIIT) and 224–276 (VVMN…RRRK). 2 stretches are compositionally biased toward polar residues: residues 7–18 (RTYTPSTRNRPI) and 27–37 (SNPQKKLTSGQ).

This sequence belongs to the universal ribosomal protein uL2 family. In terms of assembly, part of the 50S ribosomal subunit.

It localises to the plastid. The protein resides in the chloroplast. The polypeptide is Large ribosomal subunit protein uL2c (rpl2) (Cycas taitungensis (Prince sago)).